A 221-amino-acid polypeptide reads, in one-letter code: UPF0502 protein PLES_16071 (221 aa).

Belongs to the UPF0502 family.

The protein is UPF0502 protein PLES_16071 of Pseudomonas aeruginosa (strain LESB58).